Reading from the N-terminus, the 1022-residue chain is Dihydropyrimidine dehydrogenase [NADP(+)] (1022 aa).

The tract at residues A26–P45 is disordered. The region spanning E69 to F100 is the 4Fe-4S ferredoxin-type 1 domain. [4Fe-4S] cluster is bound by residues C79, C82, C87, and C91. V129 serves as a coordination point for FAD. [4Fe-4S] cluster-binding residues include C130, C136, C140, and Q156. Residues G194 to A198, E218 to L226, R235, and L261 each bind FAD. NADP(+) contacts are provided by residues A340–T343, R364–K365, R371, A437–G439, and D481–N487. G480 to T489 provides a ligand contact to FAD. FMN contacts are provided by residues S550 and K574–T575. Residues N609 and N668–S670 contribute to the substrate site. C671 acts as the Proton acceptor in catalysis. K709 is an FMN binding site. N736–T737 is a binding site for substrate. FMN contacts are provided by residues G767, T793–G795, and C816–S817. 2 4Fe-4S ferredoxin-type domains span residues V943 to E975 and T976 to R1006. C952, C955, C958, C962, C985, C988, C991, and C995 together coordinate [4Fe-4S] cluster.

This sequence belongs to the dihydropyrimidine dehydrogenase family. As to quaternary structure, homodimer. It depends on FAD as a cofactor. Requires FMN as cofactor. [4Fe-4S] cluster serves as cofactor.

Its subcellular location is the cytoplasm. It carries out the reaction 5,6-dihydrouracil + NADP(+) = uracil + NADPH + H(+). The enzyme catalyses 5,6-dihydrothymine + NADP(+) = thymine + NADPH + H(+). Its pathway is amino-acid biosynthesis; beta-alanine biosynthesis. Involved in pyrimidine base degradation. Catalyzes the reduction of uracil and thymine. Also involved the degradation of the chemotherapeutic drug 5-fluorouracil. The polypeptide is Dihydropyrimidine dehydrogenase [NADP(+)] (dpyd) (Danio rerio (Zebrafish)).